Reading from the N-terminus, the 286-residue chain is MNFKNVKVPKGPGGGVIAAVVIGGLSLYGATHTLYNVDGGHRAIVFNRLVGIKDKVYPEGTHLMIPWFERPIIYDVRAKPYLVESTSGSRDLQMVKIGLRVLTRPMADQLPEVYRSLGENYRERVLPSIIHETLKAVVAQYNASQLITQRESVSREIRKILTLRAANFHIALDDVSITGLTFGKEFTAAIEGKQVAAQEAERAKFIVEKAEQDKRSAVIRAEGEAKSAQLIGQAIANNQAFLTLRKIEAAREIAQTISRSANKVYLSSNDLLLNLQAMDLDVKPKK.

Over 1-12 (MNFKNVKVPKGP) the chain is Mitochondrial matrix. A helical; Signal-anchor for type II membrane protein transmembrane segment spans residues 13-35 (GGGVIAAVVIGGLSLYGATHTLY). Over 36–286 (NVDGGHRAIV…AMDLDVKPKK (251 aa)) the chain is Mitochondrial intermembrane.

The protein belongs to the prohibitin family. Component of a prohibitin multimeric complex in mitochondrial membranes. In terms of tissue distribution, mostly expressed in proliferative tissues, including vasculature, shoot and root apical tissues.

It is found in the mitochondrion inner membrane. Functionally, prohibitin probably acts as a holdase/unfoldase for the stabilization of newly synthesized mitochondrial proteins. This is Prohibitin-6, mitochondrial (PHB6) from Arabidopsis thaliana (Mouse-ear cress).